The primary structure comprises 431 residues: Trigger factor (431 aa).

Positions 158 to 243 (GHLVALETWS…VIEVSEPVLL (86 aa)) constitute a PPIase FKBP-type domain.

It belongs to the FKBP-type PPIase family. Tig subfamily.

It is found in the cytoplasm. It carries out the reaction [protein]-peptidylproline (omega=180) = [protein]-peptidylproline (omega=0). Its function is as follows. Involved in protein export. Acts as a chaperone by maintaining the newly synthesized protein in an open conformation. Functions as a peptidyl-prolyl cis-trans isomerase. The sequence is that of Trigger factor (tig) from Xylella fastidiosa (strain 9a5c).